Here is a 508-residue protein sequence, read N- to C-terminus: CBL-interacting protein kinase 19 (508 aa).

The disordered stretch occupies residues 1-24 (MAATPPSSQHRRPLSSSASAASLA). Low complexity predominate over residues 14–24 (LSSSASAASLA). Residues 37–291 (YELGRLLGHG…VKEVMESRWF (255 aa)) form the Protein kinase domain. ATP is bound by residues 43–51 (LGHGTFAKV) and lysine 66. Aspartate 159 (proton acceptor) is an active-site residue. The tract at residues 177-206 (DFGLSAVADQFHPDGLLHTFCGTPSYVAPE) is activation loop. Residues 311–372 (ADGDNDMPEL…EERRQRPLGS (62 aa)) form a disordered region. Over residues 313-322 (GDNDMPELEP) the composition is skewed to acidic residues. The segment covering 323-337 (SEPPPPPPFPPPPPQ) has biased composition (pro residues). A compositionally biased stretch (acidic residues) spans 338–347 (QDDDGEESGW). In terms of domain architecture, NAF spans 354–398 (ASCPATLSSEERRQRPLGSLTRPASLNAFDIISFSKGFDLSGLFE). The interval 401–430 (GSEVRFISAEPMQTIITKLEEIAKVKSFFV) is PPI.

Belongs to the protein kinase superfamily. CAMK Ser/Thr protein kinase family. SNF1 subfamily. Mn(2+) is required as a cofactor. Post-translationally, autophosphorylated. In terms of tissue distribution, expressed in roots, leaf blades and sheaths and panicles.

It catalyses the reaction L-seryl-[protein] + ATP = O-phospho-L-seryl-[protein] + ADP + H(+). The catalysed reaction is L-threonyl-[protein] + ATP = O-phospho-L-threonyl-[protein] + ADP + H(+). In terms of biological role, CIPK serine-threonine protein kinases interact with CBL proteins. Binding of a CBL protein to the regulatory NAF domain of CIPK protein lead to the activation of the kinase in a calcium-dependent manner. In Oryza sativa subsp. japonica (Rice), this protein is CBL-interacting protein kinase 19 (CIPK19).